A 365-amino-acid chain; its full sequence is Phosphate acyltransferase (365 aa).

Belongs to the PlsX family. As to quaternary structure, homodimer. Probably interacts with PlsY.

The protein localises to the cytoplasm. The catalysed reaction is a fatty acyl-[ACP] + phosphate = an acyl phosphate + holo-[ACP]. Its pathway is lipid metabolism; phospholipid metabolism. In terms of biological role, catalyzes the reversible formation of acyl-phosphate (acyl-PO(4)) from acyl-[acyl-carrier-protein] (acyl-ACP). This enzyme utilizes acyl-ACP as fatty acyl donor, but not acyl-CoA. In Jannaschia sp. (strain CCS1), this protein is Phosphate acyltransferase.